Consider the following 444-residue polypeptide: GTPase Der (444 aa).

2 consecutive EngA-type G domains span residues 2–167 and 173–349; these read LKVA…LKEI and FKFC…ENLN. GTP is bound by residues 8-15, 55-59, 118-121, 179-186, 226-230, and 291-294; these read GKPNVGKS, DTGGL, NKSE, GRPNVGKS, DTAGI, and NKWD. The region spanning 350–434 is the KH-like domain; sequence LKFNSKILTD…PITLYFKNKT (85 aa).

Belongs to the TRAFAC class TrmE-Era-EngA-EngB-Septin-like GTPase superfamily. EngA (Der) GTPase family. Associates with the 50S ribosomal subunit.

GTPase that plays an essential role in the late steps of ribosome biogenesis. This is GTPase Der from Malacoplasma penetrans (strain HF-2) (Mycoplasma penetrans).